A 345-amino-acid chain; its full sequence is UDP-N-acetylenolpyruvoylglucosamine reductase (345 aa).

Residues V15–K218 enclose the FAD-binding PCMH-type domain. R161 is an active-site residue. S230 (proton donor) is an active-site residue. Residue E327 is part of the active site.

It belongs to the MurB family. FAD serves as cofactor.

The protein localises to the cytoplasm. The catalysed reaction is UDP-N-acetyl-alpha-D-muramate + NADP(+) = UDP-N-acetyl-3-O-(1-carboxyvinyl)-alpha-D-glucosamine + NADPH + H(+). Its pathway is cell wall biogenesis; peptidoglycan biosynthesis. In terms of biological role, cell wall formation. The chain is UDP-N-acetylenolpyruvoylglucosamine reductase from Blochmanniella floridana.